Consider the following 187-residue polypeptide: Elongation factor P (187 aa).

The protein belongs to the elongation factor P family.

Its subcellular location is the cytoplasm. It participates in protein biosynthesis; polypeptide chain elongation. Its function is as follows. Involved in peptide bond synthesis. Stimulates efficient translation and peptide-bond synthesis on native or reconstituted 70S ribosomes in vitro. Probably functions indirectly by altering the affinity of the ribosome for aminoacyl-tRNA, thus increasing their reactivity as acceptors for peptidyl transferase. The chain is Elongation factor P from Brachyspira hyodysenteriae (strain ATCC 49526 / WA1).